The chain runs to 399 residues: F-box protein At1g30790 (399 aa).

Residues 3–49 (RQEIDHIPFDLTVEILTRLPAKSLMKFKCVSKLWSSIIHNQSFIDSF) form the F-box domain.

The chain is F-box protein At1g30790 from Arabidopsis thaliana (Mouse-ear cress).